The sequence spans 202 residues: LexA repressor (202 aa).

A DNA-binding region (H-T-H motif) is located at residues 28-48 (RAEIAQRLGFRSPNAAEEHLK). Catalysis depends on for autocatalytic cleavage activity residues Ser119 and Lys156.

Belongs to the peptidase S24 family. Homodimer.

It catalyses the reaction Hydrolysis of Ala-|-Gly bond in repressor LexA.. Represses a number of genes involved in the response to DNA damage (SOS response), including recA and lexA. Binds to the 16 bp palindromic sequence 5'-CTGTATATATATACAG-3'. In the presence of single-stranded DNA, RecA interacts with LexA causing an autocatalytic cleavage which disrupts the DNA-binding part of LexA, leading to derepression of the SOS regulon and eventually DNA repair. This chain is LexA repressor, found in Yersinia enterocolitica serotype O:8 / biotype 1B (strain NCTC 13174 / 8081).